Here is an 85-residue protein sequence, read N- to C-terminus: Putative membrane protein insertion efficiency factor (85 aa).

Belongs to the UPF0161 family.

It localises to the cell inner membrane. Its function is as follows. Could be involved in insertion of integral membrane proteins into the membrane. In Sodalis glossinidius (strain morsitans), this protein is Putative membrane protein insertion efficiency factor.